Consider the following 87-residue polypeptide: Small ribosomal subunit protein bS20 (87 aa).

Positions Met1–Ile15 are enriched in basic residues. Positions Met1–Lys29 are disordered. Residues Ala19–Lys29 are compositionally biased toward polar residues.

Belongs to the bacterial ribosomal protein bS20 family.

Its function is as follows. Binds directly to 16S ribosomal RNA. The protein is Small ribosomal subunit protein bS20 of Bdellovibrio bacteriovorus (strain ATCC 15356 / DSM 50701 / NCIMB 9529 / HD100).